We begin with the raw amino-acid sequence, 235 residues long: 2-C-methyl-D-erythritol 4-phosphate cytidylyltransferase (235 aa).

It belongs to the IspD/TarI cytidylyltransferase family. IspD subfamily.

It catalyses the reaction 2-C-methyl-D-erythritol 4-phosphate + CTP + H(+) = 4-CDP-2-C-methyl-D-erythritol + diphosphate. The protein operates within isoprenoid biosynthesis; isopentenyl diphosphate biosynthesis via DXP pathway; isopentenyl diphosphate from 1-deoxy-D-xylulose 5-phosphate: step 2/6. Its function is as follows. Catalyzes the formation of 4-diphosphocytidyl-2-C-methyl-D-erythritol from CTP and 2-C-methyl-D-erythritol 4-phosphate (MEP). This is 2-C-methyl-D-erythritol 4-phosphate cytidylyltransferase from Pseudomonas fluorescens (strain SBW25).